The following is a 368-amino-acid chain: S-adenosylmethionine decarboxylase proenzyme 1 (368 aa).

Catalysis depends on residues E9 and R12. The active-site Schiff-base intermediate with substrate; via pyruvic acid is the S69. The residue at position 69 (S69) is a Pyruvic acid (Ser); by autocatalysis. C83 serves as the catalytic Proton donor; for catalytic activity. Active-site proton acceptor; for processing activity residues include S234 and H247.

It belongs to the eukaryotic AdoMetDC family. The cofactor is pyruvate. Is synthesized initially as an inactive proenzyme. Formation of the active enzyme involves a self-maturation process in which the active site pyruvoyl group is generated from an internal serine residue via an autocatalytic post-translational modification. Two non-identical subunits are generated from the proenzyme in this reaction, and the pyruvate is formed at the N-terminus of the alpha chain, which is derived from the carboxyl end of the proenzyme. The post-translation cleavage follows an unusual pathway, termed non-hydrolytic serinolysis, in which the side chain hydroxyl group of the serine supplies its oxygen atom to form the C-terminus of the beta chain, while the remainder of the serine residue undergoes an oxidative deamination to produce ammonia and the pyruvoyl group blocking the N-terminus of the alpha chain.

The enzyme catalyses S-adenosyl-L-methionine + H(+) = S-adenosyl 3-(methylsulfanyl)propylamine + CO2. The protein operates within amine and polyamine biosynthesis; S-adenosylmethioninamine biosynthesis; S-adenosylmethioninamine from S-adenosyl-L-methionine: step 1/1. This is S-adenosylmethionine decarboxylase proenzyme 1 (SAMDC1) from Brassica juncea (Indian mustard).